A 386-amino-acid chain; its full sequence is SET and MYND domain-containing protein DDB_G0273589 (386 aa).

An SET domain is found at 6-294 (NGLELKSSEN…KGDQLTISYI (289 aa)). The segment at 51–94 (CFNCIKQLPSVIKLSLKCNQCNEIWYCNEQCKNENINKHQHYEC) adopts an MYND-type zinc-finger fold. Residues 136 to 171 (NNKFIEQQLNNNNNNNNDNEQLTNTLDDVFDLVENQ) adopt a coiled-coil conformation.

It belongs to the class V-like SAM-binding methyltransferase superfamily.

In terms of biological role, probable methyltransferase. The sequence is that of SET and MYND domain-containing protein DDB_G0273589 from Dictyostelium discoideum (Social amoeba).